The primary structure comprises 206 residues: MNFQQRLQSLWTLARPFCPPLLATASQMQMVVLPCLGFTLLLWSQVSGAQGQEFHFGPCQVKGVVPQKLWEAFWAVKDTMQAQDNITSARLLQQEVLQNVSDAESCYLVHTLLEFYLKTVFKNYHNRTVEVRTLKSFSTLANNFVLIVSQLQPSQENEMFSIRDSAHRRFLLFRRAFKQLDVEAALTKALGEVDILLTWMQKFYKL.

The signal sequence occupies residues 1 to 51 (MNFQQRLQSLWTLARPFCPPLLATASQMQMVVLPCLGFTLLLWSQVSGAQG). Residues Cys-59 and Cys-106 are joined by a disulfide bond. Residues Asn-85 and Asn-99 are each glycosylated (N-linked (GlcNAc...) asparagine). Residue Lys-122 forms a Glycyl lysine isopeptide (Lys-Gly) (interchain with G-Cter in ubiquitin) linkage. A glycan (N-linked (GlcNAc...) asparagine) is linked at Asn-126.

Belongs to the IL-10 family. In terms of processing, glycosylated. Ubiquitination at Lys-122 promotes proteasomal degradation. Up-regulated in melanoma cells induced to terminally differentiate.

The protein localises to the secreted. In terms of biological role, multifunctional cytokine mainly produced by T-cells that plays a regulatory role in immune response, tissue homeostasis, host defense, and oncogenesis. Possesses antiviral functions and induces the type I interferon response during influenza infection. Signals through two receptor complexes IL20RA/IL20RB or IL20RB/IL22RA1. In turn, stimulates the JAK1-STAT3 and MAPK pathways and promotes the secretion of pro-inflammatory mediators including IL8 and MMP1. Intracellularly, maintains endoplasmic reticulum homeostasis by restricting the eIF2alpha-CHOP pathway-mediated stress signal. In addition, acts as a quality control mechanism for the ubiquitin proteasome system by alerting the cell to proteasome dysfunction through activation of PKR/EIF2AK2. This is Interleukin-24 (IL24) from Homo sapiens (Human).